A 171-amino-acid chain; its full sequence is 6,7-dimethyl-8-ribityllumazine synthase (171 aa).

5-amino-6-(D-ribitylamino)uracil-binding positions include Phe24, 58–60 (ALE), and 82–84 (AVI). 87–88 (ET) serves as a coordination point for (2S)-2-hydroxy-3-oxobutyl phosphate. The active-site Proton donor is His90. Asn115 is a binding site for 5-amino-6-(D-ribitylamino)uracil. Arg129 serves as a coordination point for (2S)-2-hydroxy-3-oxobutyl phosphate. The segment at 150-171 (ALDQLGDDEDEEEDEEDEEERA) is disordered. The segment covering 154-171 (LGDDEDEEEDEEDEEERA) has biased composition (acidic residues).

This sequence belongs to the DMRL synthase family.

The enzyme catalyses (2S)-2-hydroxy-3-oxobutyl phosphate + 5-amino-6-(D-ribitylamino)uracil = 6,7-dimethyl-8-(1-D-ribityl)lumazine + phosphate + 2 H2O + H(+). The protein operates within cofactor biosynthesis; riboflavin biosynthesis; riboflavin from 2-hydroxy-3-oxobutyl phosphate and 5-amino-6-(D-ribitylamino)uracil: step 1/2. In terms of biological role, catalyzes the formation of 6,7-dimethyl-8-ribityllumazine by condensation of 5-amino-6-(D-ribitylamino)uracil with 3,4-dihydroxy-2-butanone 4-phosphate. This is the penultimate step in the biosynthesis of riboflavin. The polypeptide is 6,7-dimethyl-8-ribityllumazine synthase (Burkholderia ambifaria (strain ATCC BAA-244 / DSM 16087 / CCUG 44356 / LMG 19182 / AMMD) (Burkholderia cepacia (strain AMMD))).